The sequence spans 146 residues: Hemoglobin subunit beta (146 aa).

Position 1 is an N-acetylvaline (Val1). The Globin domain occupies 2 to 146 (HLTDAEKALV…VATALAHKYH (145 aa)). Thr12 carries the post-translational modification Phosphothreonine. Ser44 bears the Phosphoserine mark. Residue Lys59 is modified to N6-acetyllysine. Residue His63 participates in heme b binding. Lys82 carries the post-translational modification N6-acetyllysine. His92 contacts heme b. Cys93 carries the S-nitrosocysteine modification. Position 144 is an N6-acetyllysine (Lys144).

It belongs to the globin family. In terms of assembly, heterotetramer of two alpha chains and two beta chains. In terms of tissue distribution, red blood cells.

Its function is as follows. Involved in oxygen transport from the lung to the various peripheral tissues. The sequence is that of Hemoglobin subunit beta from Peromyscus crinitus (Canyon mouse).